The primary structure comprises 49 residues: Isoflavone reductase homolog 2 (49 aa).

5 to 11 lines the NADP(+) pocket; the sequence is GGTGYIG.

This sequence belongs to the NmrA-type oxidoreductase family. Isoflavone reductase subfamily.

Its subcellular location is the cytoplasm. The sequence is that of Isoflavone reductase homolog 2 from Pseudotsuga menziesii (Douglas-fir).